Consider the following 320-residue polypeptide: Metapyrocatechase 2 (320 aa).

2 disordered regions span residues 1-21 (MDTH…RPRH) and 131-153 (GPKT…GQRG). VOC domains follow at residues 25-131 (SIDH…VKIG) and 167-282 (RLSH…YSAD). His-170, His-227, and Glu-278 together coordinate Fe cation.

This sequence belongs to the extradiol ring-cleavage dioxygenase family. Requires Fe(2+) as cofactor.

It catalyses the reaction catechol + O2 = (2Z,4E)-2-hydroxy-6-oxohexa-2,4-dienoate + H(+). This chain is Metapyrocatechase 2 (mcpII), found in Cupriavidus necator (Alcaligenes eutrophus).